Here is a 107-residue protein sequence, read N- to C-terminus: Acidic phospholipase A2 braziliase-I (107 aa).

Intrachain disulfides connect cysteine 26-cysteine 100, cysteine 28-cysteine 44, cysteine 43-cysteine 86, cysteine 49-cysteine 107, cysteine 50-cysteine 79, cysteine 57-cysteine 72, and cysteine 66-cysteine 77. Residues tyrosine 27, glycine 29, and glycine 31 each contribute to the Ca(2+) site. Histidine 47 is a catalytic residue. Residue aspartate 48 participates in Ca(2+) binding. Residue aspartate 80 is part of the active site.

Monomer. Ca(2+) serves as cofactor. Expressed by the venom gland.

The protein localises to the secreted. The catalysed reaction is a 1,2-diacyl-sn-glycero-3-phosphocholine + H2O = a 1-acyl-sn-glycero-3-phosphocholine + a fatty acid + H(+). Its function is as follows. Snake venom phospholipase A2 (PLA2) that induces significant edematogenic activity. Shows mild cytotoxicity on Trypanosoma cruzi and Leishmania infantum. Also inhibits ADP- and collagen-induced platelet aggregation. Does not show myotoxic activity. This Bothrops brazili (Brazil's lancehead) protein is Acidic phospholipase A2 braziliase-I.